Consider the following 394-residue polypeptide: Envelope glycoprotein D (394 aa).

The N-terminal stretch at 1–25 (MGGTAARLGAVILFVVIVGLHGVRG) is a signal peptide. The segment at 25-57 (GKYALADASLKMADPNRFRGKDLPVLDQLTDPP) is interaction with TNFRSF14. At 26–339 (KYALADASLK…PYHPPATPNN (314 aa)) the chain is on the virion surface side. H64 lines the Zn(2+) pocket. Disulfide bonds link C91–C214, C131–C227, and C143–C152. 2 N-linked (GlcNAc...) asparagine; by host glycosylation sites follow: N119 and N146. A Zn(2+)-binding site is contributed by D240. The tract at residues 261–305 (LKIAGWHGPKAPYTSTLLPPELSETPNATQPELAPEDPEDSALLE) is profusion. The tract at residues 275-301 (STLLPPELSETPNATQPELAPEDPEDS) is disordered. N287 carries an N-linked (GlcNAc...) asparagine; by host glycan. A helical transmembrane segment spans residues 340 to 364 (MGLIAGAVGGSLLAALVICGIVYWM). Residues 365-394 (HRRTRKAPKRIRLPHIREDDQPSSHQPLFY) lie on the Intravirion side of the membrane.

It belongs to the herpesviridae glycoprotein D family. Homodimer. Interacts with host receptor TNFRSF14. Interacts with host receptor NECTIN1. Interacts (via profusion domain) with gB; this interaction occurs in the absence of gH/gL. Interacts (via profusion domain) with gH/gL heterodimer; this interaction occurs in the absence of gB. Associates with the gB-gH/gL-gD complex. Interacts (via C-terminus) with UL11 tegument protein. Interacts with host RSAD2.

Its subcellular location is the virion membrane. It is found in the host Golgi apparatus. Envelope glycoprotein that binds to the host cell entry receptors NECTIN1, TNFRSF14/HVEM and 3-O-sulfated heparan sulfate, promoting the virus entry into host cells. May trigger fusion with host membrane, by recruiting the fusion machinery composed of gB and gH/gL. This chain is Envelope glycoprotein D (gD), found in Human herpesvirus 1 (strain Patton) (HHV-1).